A 155-amino-acid chain; its full sequence is Small ribosomal subunit protein bS16 (155 aa).

A disordered region spans residues 100–155; sequence EAGIPDPAPSTEEPAAVCEASAEMAGQPGEVEPAGAAAEPNSQEPEPEEEKPQVEA. The segment covering 124-143 has biased composition (low complexity); it reads AGQPGEVEPAGAAAEPNSQE.

This sequence belongs to the bacterial ribosomal protein bS16 family.

The polypeptide is Small ribosomal subunit protein bS16 (Synechococcus sp. (strain JA-3-3Ab) (Cyanobacteria bacterium Yellowstone A-Prime)).